We begin with the raw amino-acid sequence, 65 residues long: Cecropin (65 aa).

An N-terminal signal peptide occupies residues 1 to 23; that stretch reads MNFVKVLFFISACILIMLSAVSG.

It belongs to the cecropin family.

It localises to the secreted. Has antibacterial activity. This chain is Cecropin (LOC113514368), found in Galleria mellonella (Greater wax moth).